The sequence spans 473 residues: Flavin-dependent L-tryptophan oxidase RebO (473 aa).

Residues 1-21 form the signal peptide; it reads MSRGHKKITVLGAGVAGLVAA. Residues 15-16, 35-36, Arg-43, 61-64, Glu-444, and 451-456 each bind FAD; these read VA, EG, GAMR, and AWIDGA.

It belongs to the flavin monoamine oxidase family. RebO subfamily. In terms of assembly, homodimer. FAD serves as cofactor.

It carries out the reaction 7-chloro-L-tryptophan + O2 = 3-(7-chloroindol-3-yl)-2-iminopropanoate + H2O2. The enzyme catalyses L-tryptophan + O2 = 2-iminio-3-(indol-3-yl)propanoate + H2O2. Its function is as follows. Involved in the biosynthesis of the indolocarbazole antitumor agent rebeccamycin. It generates the imine form of 7-chloroindole 3-pyruvate (7Cl-IPA) from 7-chloro-L-tryptophan (7Cl-Trp), with concomitant two-electron reduction of O(2) to H(2)O(2). The enzyme is also active with L-tryptophan as substrate. The polypeptide is Flavin-dependent L-tryptophan oxidase RebO (rebO) (Lentzea aerocolonigenes (Lechevalieria aerocolonigenes)).